Reading from the N-terminus, the 678-residue chain is uncharacterized protein (678 aa).

A run of 2 helical transmembrane segments spans residues 14 to 34 (LMFAGAGPGPMLAAASAWTGL) and 180 to 200 (GAVIIAGFPFLDLGNVTIGGF).

It belongs to the mycobacterial PPE family.

It is found in the cell membrane. This is an uncharacterized protein from Mycobacterium tuberculosis (strain CDC 1551 / Oshkosh).